Here is a 445-residue protein sequence, read N- to C-terminus: MANRKYFGTDGVRGKVGSYPITPDFALKLGWAAGKVLASQGSKMVLIGKDTRISGYMLESALEAGLAAAGLSAAFTGPMPTPAIAYLTRTFRAEAGIVISASHNPYYDNGIKFFSAKGTKLPDEIEEAIEAMLEQPMDCVESAELGKASRINDAAGRYIEFCKGTFPAHLGLEGYKIVVDCANGATYHIAPNVLRELGAEVIEIGTDPNGLNINEKCGATDVTALQAKVVETKADVGLAYDGDGDRIMMVDHLGNKVDGDQILFIIAREALRSGQLKGGVVGTLMSNMSLEIALKMLGVPFLRANVGDRYVLEKMLENDWTLGGENSGHIIIADKNTTGDGIVASLAVLAAMAQHKLSLNELASAVKLFPQVLINVRFAGGENPLESDAVKSVAAEVEKRLEGKGRILLRKSGTEPLIRVMVECQDAELAQQCAEEIAEAVKKIN.

The active-site Phosphoserine intermediate is serine 102. Positions 102, 241, 243, and 245 each coordinate Mg(2+). Serine 102 carries the phosphoserine modification.

Belongs to the phosphohexose mutase family. The cofactor is Mg(2+). Activated by phosphorylation.

The catalysed reaction is alpha-D-glucosamine 1-phosphate = D-glucosamine 6-phosphate. Catalyzes the conversion of glucosamine-6-phosphate to glucosamine-1-phosphate. The chain is Phosphoglucosamine mutase from Haemophilus influenzae (strain 86-028NP).